A 265-amino-acid polypeptide reads, in one-letter code: Uronate dehydrogenase (265 aa).

Residues 12 to 13, 32 to 34, 49 to 50, and 69 to 73 each bind NAD(+); these read QL, DLS, DL, and LGGIS. Residues S73 and 109-111 each bind substrate; that span reads SNH. Y134 (proton acceptor) is an active-site residue. K138 provides a ligand contact to NAD(+). S163 contacts substrate. C164 lines the NAD(+) pocket. R172 lines the substrate pocket.

This sequence belongs to the NAD(P)-dependent epimerase/dehydratase family. As to quaternary structure, homohexamer.

It catalyses the reaction beta-D-galacturonate + NAD(+) = D-galactaro-1,5-lactone + NADH + H(+). The catalysed reaction is beta-D-glucuronate + NAD(+) = D-glucaro-1,5-lactone + NADH + H(+). It functions in the pathway carbohydrate acid metabolism; D-galacturonate degradation via prokaryotic oxidative pathway. Catalyzes the oxidation of D-galacturonate and D-glucuronate to galactarate and D-glucarate, respectively. In fact, in water solution the substrate D-galacturonate is predominantly in pyranosic form whose beta anomer is converted by the enzyme to D-galactaro-1,5-lactone; in solution, this reaction product rearranges to the more stable D-galactaro-1,4-lactone. Makes part of the oxidative degradation pathway of D-galacturonate, which allows A.tumefaciens to utilize D-galacturonate as a sole carbon source. Cannot use NADP(+) instead of NAD(+) as cosubstrate. Is not active on D-galactose, D-glucose, D-galactonate and D-gluconate. In Agrobacterium fabrum (strain C58 / ATCC 33970) (Agrobacterium tumefaciens (strain C58)), this protein is Uronate dehydrogenase (udh).